The sequence spans 291 residues: Ribosomal RNA small subunit methyltransferase H (291 aa).

Residues 31 to 33 (GGY), aspartate 49, phenylalanine 76, aspartate 97, and glutamine 104 each bind S-adenosyl-L-methionine.

This sequence belongs to the methyltransferase superfamily. RsmH family.

It localises to the cytoplasm. It catalyses the reaction cytidine(1402) in 16S rRNA + S-adenosyl-L-methionine = N(4)-methylcytidine(1402) in 16S rRNA + S-adenosyl-L-homocysteine + H(+). Specifically methylates the N4 position of cytidine in position 1402 (C1402) of 16S rRNA. This Anaplasma marginale (strain Florida) protein is Ribosomal RNA small subunit methyltransferase H.